The chain runs to 176 residues: Adenylyl-sulfate kinase (176 aa).

Gly12–Thr19 contacts ATP. The active-site Phosphoserine intermediate is Ser86.

Belongs to the APS kinase family.

The catalysed reaction is adenosine 5'-phosphosulfate + ATP = 3'-phosphoadenylyl sulfate + ADP + H(+). It participates in sulfur metabolism; hydrogen sulfide biosynthesis; sulfite from sulfate: step 2/3. Catalyzes the synthesis of activated sulfate. This is Adenylyl-sulfate kinase from Synechococcus sp. (strain JA-3-3Ab) (Cyanobacteria bacterium Yellowstone A-Prime).